The sequence spans 500 residues: Probable lipoprotein aminopeptidase LpqL (500 aa).

The first 24 residues, 1 to 24 (MVNKSRMMPAVLAVAVVVAFLTTG), serve as a signal peptide directing secretion. Cys-25 is lipidated: N-palmitoyl cysteine. Residue Cys-25 is the site of S-diacylglycerol cysteine attachment. The PA domain occupies 140 to 231 (VTGPLVAAPA…VTKSVGFQLR (92 aa)). Zn(2+) is bound by residues His-271 and Asp-283. Glu-316 functions as the Proton acceptor in the catalytic mechanism. Glu-317, Asp-345, and His-448 together coordinate Zn(2+).

Belongs to the peptidase M28 family. M28A subfamily. Zn(2+) serves as cofactor. Post-translationally, modified by Lgt on Cys-25 with an S-linked diacylglycerol with a mixture of C16 and C19 fatty acids (palmitic and tuberculostearic acid), signal peptide is removed by LspA, modified by Lnt with an amide-linked mixture of C16 and C19 fatty acids, expressed in M.bovis.

The protein localises to the cell membrane. The catalysed reaction is Release of an N-terminal amino acid, Xaa-|-Yaa-, in which Xaa is preferably Leu, but may be other amino acids including Pro although not Arg or Lys, and Yaa may be Pro. Amino acid amides and methyl esters are also readily hydrolyzed, but rates on arylamides are exceedingly low.. Its function is as follows. An aminopeptidase; acts on free N-terminal amino groups with a very strong preference for Leu in the first position. The protein is Probable lipoprotein aminopeptidase LpqL (lpqL) of Mycobacterium tuberculosis (strain ATCC 25618 / H37Rv).